The sequence spans 425 residues: Probable threonylcarbamoyladenosine tRNA methylthiotransferase (425 aa).

The 109-residue stretch at 2–110 folds into the MTTase N-terminal domain; that stretch reads VKIYIENYGC…IIQAVEYALR (109 aa). [4Fe-4S] cluster is bound by residues Cys-11, Cys-47, Cys-76, Cys-148, Cys-152, and Cys-155. A Radical SAM core domain is found at 133–363; it reads LSPRTVYFIV…HRIRLQISYE (231 aa). The TRAM domain maps to 366–425; the sequence is QKYIGKKVEVLIHGEGKKGNVDAVTMNYKHVILPFGNSGEFRIAEIKNATSTYLLGEVMS.

Belongs to the methylthiotransferase family. CDKAL1 subfamily. [4Fe-4S] cluster serves as cofactor.

It catalyses the reaction N(6)-L-threonylcarbamoyladenosine(37) in tRNA + (sulfur carrier)-SH + AH2 + 2 S-adenosyl-L-methionine = 2-methylsulfanyl-N(6)-L-threonylcarbamoyladenosine(37) in tRNA + (sulfur carrier)-H + 5'-deoxyadenosine + L-methionine + A + S-adenosyl-L-homocysteine + 2 H(+). In terms of biological role, catalyzes the methylthiolation of N6-threonylcarbamoyladenosine (t(6)A), leading to the formation of 2-methylthio-N6-threonylcarbamoyladenosine (ms(2)t(6)A) at position 37 in tRNAs that read codons beginning with adenine. This Pyrococcus abyssi (strain GE5 / Orsay) protein is Probable threonylcarbamoyladenosine tRNA methylthiotransferase.